The primary structure comprises 582 residues: Aspartate--tRNA ligase (582 aa).

Glutamate 174 is a binding site for L-aspartate. An aspartate region spans residues 198-201 (QITK). Residue arginine 220 participates in L-aspartate binding. Residues 220 to 222 (RDE) and glutamine 229 contribute to the ATP site. Position 443 (histidine 443) interacts with L-aspartate. Residue glutamate 477 participates in ATP binding. Arginine 484 contributes to the L-aspartate binding site. Residue 529-532 (GLDR) participates in ATP binding.

Belongs to the class-II aminoacyl-tRNA synthetase family. Type 1 subfamily. Homodimer.

The protein localises to the cytoplasm. The enzyme catalyses tRNA(Asp) + L-aspartate + ATP = L-aspartyl-tRNA(Asp) + AMP + diphosphate. Functionally, catalyzes the attachment of L-aspartate to tRNA(Asp) in a two-step reaction: L-aspartate is first activated by ATP to form Asp-AMP and then transferred to the acceptor end of tRNA(Asp). The sequence is that of Aspartate--tRNA ligase from Streptococcus pyogenes serotype M3 (strain ATCC BAA-595 / MGAS315).